Here is a 265-residue protein sequence, read N- to C-terminus: MAREKIQIKKIDNSTARQVTFSKRRRGLFKKAEELSVLCDADVALIIFSSTGKLFDYSSSSMKQILERRDLHSKNLEKLDQPSLELQLVENSNYSRLSKEISEKSHRLRQMRGEELQGLNIEELQQLERSLETGLSRVIERKGDKIMREINQLQQKGMHLMEENEKLRQQVMEISNNNNNNNNGYREAGVVIFEPENGFNNNNNEDGQSSESVTNPCNSIDPPPQDDDSSDTSLKLGLATLLRLKRSKARCGYFCMLLEEGEKKK.

One can recognise an MADS-box domain in the interval 3–57; that stretch reads REKIQIKKIDNSTARQVTFSKRRRGLFKKAEELSVLCDADVALIIFSSTGKLFDY. Residues 87-177 enclose the K-box domain; it reads QLVENSNYSR…RQQVMEISNN (91 aa). The tract at residues 196–232 is disordered; that stretch reads ENGFNNNNNEDGQSSESVTNPCNSIDPPPQDDDSSDT. Over residues 205–218 the composition is skewed to polar residues; that stretch reads EDGQSSESVTNPCN.

In terms of tissue distribution, widely expressed with highest levels in shoot tips and axillary buds. Also found in fully developed pedicels and flowers.

It is found in the nucleus. In terms of biological role, putative transcription factor that coordinates gene expression underlying the differentiation of the pedicel abscission zone. May also be involved in the maintenance of the inflorescence meristem state. This is MADS-box protein JOINTLESS (J) from Solanum lycopersicum (Tomato).